Consider the following 184-residue polypeptide: Protein GrpE (184 aa).

Residues 1–26 are disordered; that stretch reads MTAPQEPVDSTPESGENAATPGLEDD.

Belongs to the GrpE family. In terms of assembly, homodimer.

The protein localises to the cytoplasm. Functionally, participates actively in the response to hyperosmotic and heat shock by preventing the aggregation of stress-denatured proteins, in association with DnaK and GrpE. It is the nucleotide exchange factor for DnaK and may function as a thermosensor. Unfolded proteins bind initially to DnaJ; upon interaction with the DnaJ-bound protein, DnaK hydrolyzes its bound ATP, resulting in the formation of a stable complex. GrpE releases ADP from DnaK; ATP binding to DnaK triggers the release of the substrate protein, thus completing the reaction cycle. Several rounds of ATP-dependent interactions between DnaJ, DnaK and GrpE are required for fully efficient folding. The sequence is that of Protein GrpE from Bordetella bronchiseptica (strain ATCC BAA-588 / NCTC 13252 / RB50) (Alcaligenes bronchisepticus).